The chain runs to 442 residues: SPRY domain-containing protein 3 (442 aa).

One can recognise a B30.2/SPRY domain in the interval 17 to 204 (DLNLHYRFLN…VRLHLNAELG (188 aa)). The tract at residues 371–394 (EGEEEEEEEEEEEDGEEIEPEHEG) is disordered. Residues 372 to 390 (GEEEEEEEEEEEDGEEIEP) are compositionally biased toward acidic residues.

The sequence is that of SPRY domain-containing protein 3 (SPRYD3) from Homo sapiens (Human).